We begin with the raw amino-acid sequence, 438 residues long: Trigger factor (438 aa).

A PPIase FKBP-type domain is found at aspartate 160–proline 245.

This sequence belongs to the FKBP-type PPIase family. Tig subfamily.

It localises to the cytoplasm. It carries out the reaction [protein]-peptidylproline (omega=180) = [protein]-peptidylproline (omega=0). Its function is as follows. Involved in protein export. Acts as a chaperone by maintaining the newly synthesized protein in an open conformation. Functions as a peptidyl-prolyl cis-trans isomerase. The protein is Trigger factor of Francisella tularensis subsp. mediasiatica (strain FSC147).